The primary structure comprises 335 residues: CTD kinase subunit beta (335 aa).

Cyclin N-terminal domains are found at residues 26 to 151 and 158 to 241; these read ILST…CFDF and NYMV…LYMH. Positions 269 to 293 are disordered; it reads KNSGRPQKPPQIDPHSSSLADEYRE.

The protein belongs to the cyclin family. In terms of assembly, CTDK-I consists of three subunits, ctk1/lsk1, ctk2/lsc1 and ctk3 (also called alpha, beta and gamma). Interacts with ctk1/lsk1. This interaction is dependent on ctk1/lsk1 kinase activity.

It is found in the cytoplasm. It localises to the nucleus. In terms of biological role, cyclin subunit of the CTDK-I complex, which hyperphosphorylates the C-terminal heptapeptide repeat domain (CTD) of the largest RNA polymerase II subunit. As part of the CTDK-I complex, involved in RNA polymerase II transcriptional elongation and pre-mRNA 3'-end processing. Together with ctk3, required for ctk1/lsk1 CTD kinase activation. Together with ctk1/lsk1, required for the regulation of cytokinesis by phosphorylating 'Ser-2' residues found in the heptad repeats of the CTD. This chain is CTD kinase subunit beta (lsc1), found in Schizosaccharomyces pombe (strain 972 / ATCC 24843) (Fission yeast).